A 534-amino-acid chain; its full sequence is Echilunin cytochrome P450 monooxygenase (534 aa).

Residues 18 to 38 traverse the membrane as a helical segment; it reads VSPAALSWAVVAIYLGTFFWL. Residue C441 coordinates heme.

It belongs to the cytochrome P450 family. Heme is required as a cofactor.

It localises to the membrane. It catalyses the reaction preechinulin + reduced [NADPH--hemoprotein reductase] + O2 = neoechinulin A + oxidized [NADPH--hemoprotein reductase] + 2 H2O + H(+). It participates in secondary metabolite biosynthesis. The protein operates within alkaloid biosynthesis. Cytochrome P450 monooxygenase; part of the gene cluster that mediates the biosynthesis of echinulin family alkaloid. The pathway begins with the biosynthesis of the cyclic dipeptide cyclo-L-Trp-L-Ala (cyclo-TA) by the NRPS echPS via condensation of L-alanine and L-tryptophan. The prenyltransferase echPT1 then catalyzes the first prenylation step, a reverse prenylation reaction at C2, to yield preechinulin. Preechinulin is the substrate of the cytochrome P450 monooxygenase echP450 that catalyzes the formation of the double bond between C10 and C11 to produce neoechulin A. The unique prenyltransferase echPT2 functions as a competitive enzyme with echP450 for preechinulin metabolization and uses preechinulin for effective regiospecific prenylations. Preechinulin is prenylated by echPT2 at C5 or C7. C7-prenylation leads to accumulation of tardioxopiperazine B without further modification by echPT2. In contrast, the C5-prenylated tardioxopiperazine A can be prenylated again by echPT2, predominantly at C7 to form echinulin or less frequently at C4 to give variecolorin L. EchPT2 also accepts neoechilunin A to produce varlecolorin G (prenylation at C5) or isoechinulin A (prenylation at C7). EchPT2 further converts isoechinulin A into dehydroechinulin. Moreover, a yet unidentified enzyme can also convert neoechilunin A into neoechilunin B by introducing a double bond between positions C14 and C17 and thus provides a further substrate to echPT2 for C5 and C7 prenylation. This chain is Echilunin cytochrome P450 monooxygenase, found in Aspergillus ruber (strain CBS 135680).